Here is a 148-residue protein sequence, read N- to C-terminus: Homoprotocatechuate degradative operon repressor (148 aa).

Residues 2-134 (HDSLTIALLQ…LTHLLEEFIA (133 aa)) enclose the HTH marR-type domain.

Its function is as follows. Repressor for the homoprotocatechuate catabolic pathway hpc operon. This is Homoprotocatechuate degradative operon repressor (hpcR) from Escherichia coli.